The following is a 456-amino-acid chain: RUN domain-containing protein 3B (456 aa).

The segment at 1–24 is disordered; it reads MASRSLGGLSGIRGGGGGGGKKSL. Positions 8–21 are enriched in gly residues; the sequence is GLSGIRGGGGGGGK. The residue at position 13 (Arg-13) is an Omega-N-methylarginine. The region spanning 57–189 is the RUN domain; the sequence is DDSSPEFNNF…IDFSFCLKGE (133 aa). 2 positions are modified to phosphoserine: Ser-215 and Ser-216. The disordered stretch occupies residues 216-237; the sequence is SDEEELRTLGSSGSESSTPENV. The segment covering 224–235 has biased composition (polar residues); sequence LGSSGSESSTPE. Residues 300-325 adopt a coiled-coil conformation; that stretch reads AHKLEKEQLEYIIVELQDQLTVLKNN. Residues 382–405 are compositionally biased toward polar residues; the sequence is SLSQTSLDPGQSQEGDGKQDTLNV. Residues 382–411 are disordered; that stretch reads SLSQTSLDPGQSQEGDGKQDTLNVMSEGKE.

The protein belongs to the RUNDC3 family. In terms of assembly, interacts with RAP2A.

In Pongo abelii (Sumatran orangutan), this protein is RUN domain-containing protein 3B (RUNDC3B).